Reading from the N-terminus, the 271-residue chain is MNDIDREEPCAAAAVPESMAAHVMGYKWARDKVGQSGCAVYRLHSKSGGSDLFLKHGKDAFADDVTDEMVRLRWLAGHISVPSVVSFVRTPNQAWLLTTAIHGKTAYQVLKSDFGARLVVVDALAAFMRRLHAIPVSECSVQQWTTHAGLPERGSIEAGVVDVDDFDKEREGWTAEQVWEAMHRLLPLAPDPVVTHGDFSLDNLLIVEGKVVGCIDVGRAGIADRYQDLAVLWNCLEEFEPSLQERLVAQYGIADPDRRKLQFHLLLDELF.

Aspartate 198 serves as the catalytic Proton acceptor.

Belongs to the aminoglycoside phosphotransferase family.

The enzyme catalyses kanamycin A + ATP = kanamycin 3'-phosphate + ADP + H(+). Functionally, resistance to kanamycin and structurally-related aminoglycosides, including amikacin. In Escherichia coli, this protein is Aminoglycoside 3'-phosphotransferase (aphA).